The sequence spans 600 residues: Integrator complex subunit 11 (600 aa).

Zn(2+) contacts are provided by histidine 68, histidine 70, aspartate 72, histidine 73, histidine 157, and aspartate 178. Positions histidine 68 to histidine 73 match the HXHXDH motif motif. Glutamate 203 is an active-site residue. Lysine 381 is covalently cross-linked (Glycyl lysine isopeptide (Lys-Gly) (interchain with G-Cter in SUMO)). Histidine 414 contributes to the Zn(2+) binding site. Residues lysine 462 and lysine 475 each participate in a glycyl lysine isopeptide (Lys-Gly) (interchain with G-Cter in SUMO) cross-link. The Nuclear localization signal motif lies at leucine 469–leucine 479.

Belongs to the metallo-beta-lactamase superfamily. RNA-metabolizing metallo-beta-lactamase-like family. INTS11 subfamily. As to quaternary structure, component of the Integrator complex, composed of core subunits INTS1, INTS2, INTS3, INTS4, INTS5, INTS6, INTS7, INTS8, INTS9/RC74, INTS10, INTS11/CPSF3L, INTS12, INTS13, INTS14 and INTS15. The core complex associates with protein phosphatase 2A subunits PPP2CA and PPP2R1A, to form the Integrator-PP2A (INTAC) complex. INTS11 is part of the RNA endonuclease subcomplex, composed of INTS4, INTS9, INTS11 and inositol hexakisphosphate (InsP6). Interacts with WDR73; interaction is required for the assembly of the RNA endonuclease subcomplex in the cytoplasm. Interacts with BRAT1; interaction is required for the assembly of the RNA endonuclease subcomplex and inhibits the endonuclease activity of INTS11 before formation of mature integrator complex. It depends on Zn(2+) as a cofactor. Post-translationally, sumoylated; sumoylation regulates its subcellular location and is required for integrator complex integrity.

It localises to the nucleus. The protein resides in the cytoplasm. Its activity is regulated as follows. The RNA endonuclease activity is inhibited by BRAT1 that forms hyrogen bond and hydrophobic interactions with the active site. Its function is as follows. RNA endonuclease component of the integrator complex, a multiprotein complex that terminates RNA polymerase II (Pol II) transcription in the promoter-proximal region of genes. The integrator complex provides a quality checkpoint during transcription elongation by driving premature transcription termination of transcripts that are unfavorably configured for transcriptional elongation: the complex terminates transcription by (1) catalyzing dephosphorylation of the C-terminal domain (CTD) of Pol II subunit POLR2A/RPB1 and SUPT5H/SPT5, (2) degrading the exiting nascent RNA transcript via endonuclease activity and (3) promoting the release of Pol II from bound DNA. The integrator complex is also involved in terminating the synthesis of non-coding Pol II transcripts, such as enhancer RNAs (eRNAs), small nuclear RNAs (snRNAs), telomerase RNAs and long non-coding RNAs (lncRNAs). Within the integrator complex, INTS11 constitutes the RNA endonuclease subunit that degrades exiting nascent RNA transcripts. Mediates recruitment of cytoplasmic dynein to the nuclear envelope, probably as component of the integrator complex. This chain is Integrator complex subunit 11, found in Mus musculus (Mouse).